Reading from the N-terminus, the 116-residue chain is Tachykinin-3 (116 aa).

Positions methionine 1–glycine 20 are cleaved as a signal peptide. The propeptide occupies alanine 21–glutamine 79. Methionine 91 carries the post-translational modification Methionine amide. The interval lysine 93–lysine 116 is disordered. Positions asparagine 95–lysine 116 are excised as a propeptide.

Belongs to the tachykinin family.

It is found in the secreted. Tachykinins are active peptides which excite neurons, evoke behavioral responses, are potent vasodilators and secretagogues, and contract (directly or indirectly) many smooth muscles. Is a critical central regulator of gonadal function. The sequence is that of Tachykinin-3 (Tac3) from Mus musculus (Mouse).